We begin with the raw amino-acid sequence, 400 residues long: Cytochrome b (400 aa).

The next 4 helical transmembrane spans lie at 32–52, 76–98, 113–133, and 179–199; these read FGSL…TLAM, WLIR…LHIG, TWSI…LGYV, and FFSL…MHLI. Heme b is bound by residues His-82 and His-96. Heme b is bound by residues His-183 and His-197. An a ubiquinone-binding site is contributed by His-202. The next 4 membrane-spanning stretches (helical) occupy residues 226-246, 290-310, 322-342, and 349-369; these read YLFK…IFVF, AVGV…PYLD, LSKV…QLGA, and FIVF…IIIP.

Belongs to the cytochrome b family. Fungal cytochrome b-c1 complex contains 10 subunits; 3 respiratory subunits, 2 core proteins and 5 low-molecular weight proteins. Cytochrome b-c1 complex is a homodimer. It depends on heme b as a cofactor.

Its subcellular location is the mitochondrion inner membrane. Its function is as follows. Component of the ubiquinol-cytochrome c reductase complex (complex III or cytochrome b-c1 complex) that is part of the mitochondrial respiratory chain. The b-c1 complex mediates electron transfer from ubiquinol to cytochrome c. Contributes to the generation of a proton gradient across the mitochondrial membrane that is then used for ATP synthesis. This Epidermophyton floccosum protein is Cytochrome b (cob).